Reading from the N-terminus, the 475-residue chain is Ribulose bisphosphate carboxylase large chain (475 aa).

Residues 1 to 2 constitute a propeptide that is removed on maturation; that stretch reads MS. P3 bears the N-acetylproline mark. K14 carries the N6,N6,N6-trimethyllysine modification. Residues N123 and T173 each contribute to the substrate site. K175 serves as the catalytic Proton acceptor. Substrate is bound at residue K177. Residues K201, D203, and E204 each contribute to the Mg(2+) site. At K201 the chain carries N6-carboxylysine. The Proton acceptor role is filled by H294. Substrate contacts are provided by R295, H327, and S379.

Belongs to the RuBisCO large chain family. Type I subfamily. As to quaternary structure, heterohexadecamer of 8 large chains and 8 small chains; disulfide-linked. The disulfide link is formed within the large subunit homodimers. Mg(2+) is required as a cofactor. The disulfide bond which can form in the large chain dimeric partners within the hexadecamer appears to be associated with oxidative stress and protein turnover.

Its subcellular location is the plastid. The protein resides in the chloroplast. The catalysed reaction is 2 (2R)-3-phosphoglycerate + 2 H(+) = D-ribulose 1,5-bisphosphate + CO2 + H2O. The enzyme catalyses D-ribulose 1,5-bisphosphate + O2 = 2-phosphoglycolate + (2R)-3-phosphoglycerate + 2 H(+). Functionally, ruBisCO catalyzes two reactions: the carboxylation of D-ribulose 1,5-bisphosphate, the primary event in carbon dioxide fixation, as well as the oxidative fragmentation of the pentose substrate in the photorespiration process. Both reactions occur simultaneously and in competition at the same active site. The protein is Ribulose bisphosphate carboxylase large chain of Chlorokybus atmophyticus (Soil alga).